A 167-amino-acid polypeptide reads, in one-letter code: Transmembrane protein 229B (167 aa).

Residues 1-14 lie on the Cytoplasmic side of the membrane; it reads MAAAEPLTAFSRWY. A helical membrane pass occupies residues 15–35; it reads LYAIHGYFCEVMFTAAWEFVV. Topologically, residues 36-40 are extracellular; the sequence is NFNWK. A helical membrane pass occupies residues 41–61; the sequence is FPGVTSVWALFIYGTSILIVE. Residues 62–72 are Cytoplasmic-facing; sequence KMYLYLKDKCH. Residues 73–93 form a helical membrane-spanning segment; the sequence is ILVRCFIYTLWTYLWEFTTGL. Residues 94–109 lie on the Extracellular side of the membrane; that stretch reads ILRQFNACPWDYSQFD. Residues 110 to 130 form a helical membrane-spanning segment; that stretch reads FDFMGLITLEYAIPWFCASFI. Topologically, residues 131–167 are cytoplasmic; that stretch reads MEQLVIRNTLRLRFDETAEPGAPTVPVALANGHVKTD.

This sequence belongs to the TMEM229 family.

Its subcellular location is the membrane. The sequence is that of Transmembrane protein 229B (TMEM229B) from Gallus gallus (Chicken).